The sequence spans 1479 residues: MAERANLVFHNKEIDGTGMKRLISRLIDHFGMGYTSHILDQLKTLGFHQATTTSISLGIEDLLTIPSKGWLVQDAEQQSFLLEKHYYYGAVHAVEKLRQSVEIWYATSEYLKQEMNSNFRITDPSNPVYLMSFSGARGNASQVHQLVGMRGLMSDPQGQMIDLPIQSNLREGLSLTEYIISCYGARKGVVDTAVRTADAGYLTRRLVEVVQHIIVRRRDCGTIRGISVSPQNGMTEKLFVQTLIGRVLADDIYIGSRCIAARNQDIGIGLVNRFITAFRAQPFRAQPIYIRTPFTCRSTSWICQLCYGRSPTHSDLVELGEAVGIIAGQSIGEPGTQLTLRTFHTGGVFTGGTADLVRSPSNGKIKFNENLVHPTRTRHGQPAFLCYIDLHVTIQSQDILYSVNIPSKSLILVQNDQYVKSEQVIAEIRAGTSTLHFKERVQKHIYSESDGEMHWSTDVYHAPEYQYGNLRRLPKTSHLWILSVSMCRSSIASFSLHKDQDQMNTYGKKDREILDYSTSDRIMSNGHWNFIYPSIFQDNSDLLAKKRRNRFVIPLQYHQEQEKELISCFGISIEIPLMGVLRRNTIFAYFDDPRYRKDKKGSGIVKFRYRTLEEEYRTRAEDSEEEYETLEDEYRTREDEYEYETLEESKYGILEDEYEYETLEDEYGSPENEYGNPENEYRTLEKDSEEEYGSPESKYRTQEDEYGTIEEDSEDEYGSPGESAEEKYGTLEEDSEEDSEDEYESPEEDSILKKEGLIEHRGTKEFSLKYQKEVDRFFFILQELHILPRSSSLKILDNSIIGVDTQLTKNTRSRLGGLVRVKRKKSHTELKIFSGDIHFPEEADKILGGCLIPPERQKKDSKESKKRKNWVYVQRKKILKSKEKYFVSVRPTVAYEMDEGRNLATLFPQDLLQEENNLQIRLVNFISHENSKLTQRIYHTNSQFVRTCLVVNWEQEEKEKAGASLVEVRANDLIRDFLRIELVKSTISYTRKRYDRTSAGPIPHNRLDRANINSFYSKAKIESLSQHPEAIGTLLNRNKEYHSLMILSASNCSRIGLFKNSKHPNAIKEWNPRIPIREIFGPLGAIVASISHFSSSYYLLTHNKILLKKYLFVDNLKQTFQVLQELKYSLIDENKRISNFDSNIMLDPFLLNCHFVHHDSWEETLAIIHLGQFICENVCLFKSHIKKSGQIFIVNMNSFVIRAAKPYLATTGATVNGHYGEILYKGDRLVTFIYEKSRSSDITQGLPKVEQIFEARSIDSLSPNLERRIEDWNERIPRILGVPWGFLIGAELTIAQSRISLVNKIQKVYRSQGVQIHNRHIEIIIRQVTSKVRVSEDGMSNVFSPGELIGLLRAERAGRALDESIYYRAILLGITRASLNTQSFISEASFQETARVLAKAALRGRIDWLKGLKENVVLGGIIPVGTGFQKFVHRSPQDKNLYFEIKKKNLFASEMRDFLFLHTELVSSDSDVTNNFYET.

Zn(2+) is bound by residues Cys-220, Cys-296, Cys-303, and Cys-306. Disordered regions lie at residues Thr-618 to Glu-640 and Leu-663 to Gly-756. 3 stretches are compositionally biased toward acidic residues: residues Asp-622–Glu-631, Asp-704–Tyr-717, and Leu-731–Asp-749.

Belongs to the RNA polymerase beta' chain family. RpoC2 subfamily. In plastids the minimal PEP RNA polymerase catalytic core is composed of four subunits: alpha, beta, beta', and beta''. When a (nuclear-encoded) sigma factor is associated with the core the holoenzyme is formed, which can initiate transcription. Zn(2+) serves as cofactor.

It localises to the plastid. Its subcellular location is the chloroplast. The catalysed reaction is RNA(n) + a ribonucleoside 5'-triphosphate = RNA(n+1) + diphosphate. DNA-dependent RNA polymerase catalyzes the transcription of DNA into RNA using the four ribonucleoside triphosphates as substrates. This Triticum aestivum (Wheat) protein is DNA-directed RNA polymerase subunit beta''.